Reading from the N-terminus, the 159-residue chain is Large ribosomal subunit protein uL10 (159 aa).

This sequence belongs to the universal ribosomal protein uL10 family. Part of the ribosomal stalk of the 50S ribosomal subunit. The N-terminus interacts with L11 and the large rRNA to form the base of the stalk. The C-terminus forms an elongated spine to which L12 dimers bind in a sequential fashion forming a multimeric L10(L12)X complex.

Functionally, forms part of the ribosomal stalk, playing a central role in the interaction of the ribosome with GTP-bound translation factors. The polypeptide is Large ribosomal subunit protein uL10 (Campylobacter jejuni subsp. jejuni serotype O:6 (strain 81116 / NCTC 11828)).